The sequence spans 501 residues: Probable histidine--tRNA ligase, mitochondrial (501 aa).

Residues Thr32 to Ile54 form a disordered region. A compositionally biased stretch (low complexity) spans Asn33–Ile54.

The protein belongs to the class-II aminoacyl-tRNA synthetase family.

It localises to the mitochondrion matrix. The enzyme catalyses tRNA(His) + L-histidine + ATP = L-histidyl-tRNA(His) + AMP + diphosphate + H(+). This is Probable histidine--tRNA ligase, mitochondrial (mhisS) from Dictyostelium discoideum (Social amoeba).